A 401-amino-acid polypeptide reads, in one-letter code: S-adenosylmethionine synthase (401 aa).

H15 contacts ATP. D17 provides a ligand contact to Mg(2+). E43 is a binding site for K(+). L-methionine-binding residues include E56 and Q99. The interval Q99–T109 is flexible loop. Positions P101–L132 are disordered. ATP contacts are provided by residues D174–K176, D254, R260–K261, A277, and K281. D254 provides a ligand contact to L-methionine. Residue K285 participates in L-methionine binding.

The protein belongs to the AdoMet synthase family. In terms of assembly, homotetramer; dimer of dimers. The cofactor is Mg(2+). Requires K(+) as cofactor.

The protein localises to the cytoplasm. It carries out the reaction L-methionine + ATP + H2O = S-adenosyl-L-methionine + phosphate + diphosphate. It participates in amino-acid biosynthesis; S-adenosyl-L-methionine biosynthesis; S-adenosyl-L-methionine from L-methionine: step 1/1. In terms of biological role, catalyzes the formation of S-adenosylmethionine (AdoMet) from methionine and ATP. The overall synthetic reaction is composed of two sequential steps, AdoMet formation and the subsequent tripolyphosphate hydrolysis which occurs prior to release of AdoMet from the enzyme. The protein is S-adenosylmethionine synthase of Corynebacterium urealyticum (strain ATCC 43042 / DSM 7109).